The chain runs to 286 residues: Sulfate transport system permease protein CysT (286 aa).

Helical transmembrane passes span 27 to 47 (WVVTIIYLLLILVLPIAALLV), 74 to 94 (FITALAAGLVNGVMGTLVAWV), 108 to 128 (AMVDLPFALPTSVAGLVLATL), 146 to 166 (IAFSRLGVFVAMVFISLPFIV), 195 to 215 (FWRVIFPPLIPPILTGIALGF), 224 to 244 (SVVLIASNIPFKDLIAPVLVF), and 257 to 276 (VIGAVLLSVSLILLLIINLL). One can recognise an ABC transmembrane type-1 domain in the interval 70–273 (YNVTFITALA…SVSLILLLII (204 aa)).

The protein belongs to the binding-protein-dependent transport system permease family. CysTW subfamily. The complex is composed of two ATP-binding proteins (CysA), two transmembrane proteins (CysT and CysW) and a solute-binding protein (CysP).

Its subcellular location is the cell inner membrane. In terms of biological role, part of the ABC transporter complex CysAWTP (TC 3.A.1.6.1) involved in sulfate/thiosulfate import. Probably responsible for the translocation of the substrate across the membrane. The polypeptide is Sulfate transport system permease protein CysT (cysT) (Synechocystis sp. (strain ATCC 27184 / PCC 6803 / Kazusa)).